The sequence spans 172 residues: Large ribosomal subunit protein uL10 (172 aa).

Belongs to the universal ribosomal protein uL10 family. Part of the ribosomal stalk of the 50S ribosomal subunit. The N-terminus interacts with L11 and the large rRNA to form the base of the stalk. The C-terminus forms an elongated spine to which L12 dimers bind in a sequential fashion forming a multimeric L10(L12)X complex.

In terms of biological role, forms part of the ribosomal stalk, playing a central role in the interaction of the ribosome with GTP-bound translation factors. The sequence is that of Large ribosomal subunit protein uL10 from Lawsonia intracellularis (strain PHE/MN1-00).